A 490-amino-acid polypeptide reads, in one-letter code: MVGVGPKRPPSRKGSMSDVPQNLLEHIKHFEEIFTVDTATLKKIVDHFVNELTKGLSVEGGNIPMNVTWVLGFPDGKETGTFLALDMGGTNLRVCEITLTEEKGGFDIIQSKYRMPEELKTGEAEELWQYIVDCVEQFIQFHHENENLSKLPLGFTFSYPATQDYIDHGVLQRWTKGFDIDGVEGKDVVPPLEKVFKERGLPIKVAALINDTTGTLIASSYTDPAMKIGCIFGTGVNAAYMENAGSIPKLAHMNLPPDMPVAINCEYGAFDNEHIVLPLTKYDHIIDRDSPRPGQQAFEKMTAGLYLGEIFRLALVDILDTQPGLIFKDQDTSQLRIPYLLDSSFPAAIEEDPYENLIETAELVQNMLKIKATRSELELMRRLAELIGTRAARLSACGVAAICKKKNIESCHVGADGSVFTKYPHFKARGAQALREILDWAPSEKDKVTIHAAEDGSGVGAALIAALTLKRVKAGNTAGIRDAQAMLAMC.

Positions 21 to 466 constitute a Hexokinase domain; that stretch reads QNLLEHIKHF…SGVGAALIAA (446 aa). Positions 75–209 are hexokinase small subdomain; sequence DGKETGTFLA…GLPIKVAALI (135 aa). The hexokinase large subdomain stretch occupies residues 210 to 455; sequence NDTTGTLIAS…DKVTIHAAED (246 aa).

The protein belongs to the hexokinase family. Monomer.

The catalysed reaction is a D-hexose + ATP = a D-hexose 6-phosphate + ADP + H(+). It catalyses the reaction D-fructose + ATP = D-fructose 6-phosphate + ADP + H(+). The enzyme catalyses D-glucose + ATP = D-glucose 6-phosphate + ADP + H(+). It participates in carbohydrate metabolism; hexose metabolism. It functions in the pathway carbohydrate degradation; glycolysis; D-glyceraldehyde 3-phosphate and glycerone phosphate from D-glucose: step 1/4. Functionally, catalyzes the phosphorylation of hexose, such as D-glucose and D-fructose, to hexose 6-phosphate (D-glucose 6-phosphate and D-fructose 6-phosphate, respectively). Mediates the initial step of glycolysis by catalyzing phosphorylation of D-glucose to D-glucose 6-phosphate. This is Hexokinase (hxkA) from Emericella nidulans (strain FGSC A4 / ATCC 38163 / CBS 112.46 / NRRL 194 / M139) (Aspergillus nidulans).